A 110-amino-acid chain; its full sequence is Ferredoxin (110 aa).

4Fe-4S ferredoxin-type domains lie at 2–30 and 31–60; these read TYIV…YEGE and FMLV…PESP. [3Fe-4S] cluster is bound by residues Cys-9 and Cys-17. Residues Cys-21, Cys-40, Cys-43, and Cys-46 each coordinate [4Fe-4S] cluster. A [3Fe-4S] cluster-binding site is contributed by Cys-50.

[4Fe-4S] cluster serves as cofactor. It depends on [3Fe-4S] cluster as a cofactor.

Ferredoxins are iron-sulfur proteins that transfer electrons in a wide variety of metabolic reactions. This is Ferredoxin (fdxA) from Rickettsia typhi (strain ATCC VR-144 / Wilmington).